The primary structure comprises 208 residues: Large ribosomal subunit protein uL4 (208 aa).

The tract at residues 45-96 (RQGTHKSKTRAEVRGGGRKPYRQKGTGNARQGSTRSPLMVGGGTIFGPTPHG) is disordered. Positions 69–80 (GTGNARQGSTRS) are enriched in polar residues.

This sequence belongs to the universal ribosomal protein uL4 family. Part of the 50S ribosomal subunit.

Its function is as follows. One of the primary rRNA binding proteins, this protein initially binds near the 5'-end of the 23S rRNA. It is important during the early stages of 50S assembly. It makes multiple contacts with different domains of the 23S rRNA in the assembled 50S subunit and ribosome. Functionally, forms part of the polypeptide exit tunnel. The protein is Large ribosomal subunit protein uL4 of Chlorobium phaeovibrioides (strain DSM 265 / 1930) (Prosthecochloris vibrioformis (strain DSM 265)).